A 465-amino-acid chain; its full sequence is Mothers against decapentaplegic homolog 5 (465 aa).

Threonine 2 bears the N-acetylthreonine mark. One can recognise an MH1 domain in the interval 13 to 137; the sequence is PAVKRLLGWK…YKRVESPVLP (125 aa). Zn(2+)-binding residues include cysteine 65, cysteine 110, cysteine 122, and histidine 127. A disordered region spans residues 163 to 243; the sequence is NEPHMPQNAT…GQDNSQPMDT (81 aa). Residues 169–182 are compositionally biased toward polar residues; that stretch reads QNATFPDSFHQPNS. Residues 186-197 are compositionally biased toward pro residues; that stretch reads PLSPNSPYPPSP. A compositionally biased stretch (low complexity) spans 198 to 214; sequence ASSTYPNSPASSGPGSP. The segment covering 234 to 243 has biased composition (polar residues); the sequence is GQDNSQPMDT. The MH2 domain occupies 271–465; that stretch reads WCSIVYYELN…SPLNPISSVS (195 aa). Residues serine 463 and serine 465 each carry the phosphoserine modification.

Belongs to the dwarfin/SMAD family. Homodimer. Forms trimers with the co-SMAD SMAD4. Interacts with PEBP2-alpha subunit and SMURF1. Interacts with SUV39H1 and SUV39H2. Interacts (via MH2 domain) with LEMD3. Interacts with WWP1. Interacts with TMEM119. Interacts with ZNF8. Interacts with RANBP3L. Interacts with HK1. Interacts with HGS; this interaction attenuates BMP signaling. Post-translationally, phosphorylated on serine by BMP (bone morphogenetic proteins) type 1 receptor kinase. Ubiquitin-mediated proteolysis by SMAD-specific E3 ubiquitin ligase SMURF1.

It localises to the cytoplasm. The protein resides in the nucleus. Its subcellular location is the mitochondrion. Functionally, transcriptional regulator that plays a role in various cellular processes including embryonic development, cell differentiation, angiogenesis and tissue homeostasis. Upon BMP ligand binding to their receptors at the cell surface, is phosphorylated by activated type I BMP receptors (BMPRIs) and associates with SMAD4 to form a heteromeric complex which translocates into the nucleus acting as transcription factor. In turn, the hetero-trimeric complex recognizes cis-regulatory elements containing Smad Binding Elements (SBEs) to modulate the outcome of the signaling network. Non-phosphorylated SMAD5 has a cytoplasmic role in energy metabolism regulation by promoting mitochondrial respiration and glycolysis in response to cytoplasmic pH changes. Mechanistically, interacts with hexokinase 1/HK1 and thereby accelerates glycolysis. The polypeptide is Mothers against decapentaplegic homolog 5 (Smad5) (Rattus norvegicus (Rat)).